Here is a 369-residue protein sequence, read N- to C-terminus: uncharacterized protein (369 aa).

This is an uncharacterized protein from Haloarcula marismortui (strain ATCC 43049 / DSM 3752 / JCM 8966 / VKM B-1809) (Halobacterium marismortui).